The following is a 418-amino-acid chain: NADH-quinone oxidoreductase subunit D (418 aa).

It belongs to the complex I 49 kDa subunit family. In terms of assembly, NDH-1 is composed of 14 different subunits. Subunits NuoB, C, D, E, F, and G constitute the peripheral sector of the complex.

It is found in the cell inner membrane. The enzyme catalyses a quinone + NADH + 5 H(+)(in) = a quinol + NAD(+) + 4 H(+)(out). Its function is as follows. NDH-1 shuttles electrons from NADH, via FMN and iron-sulfur (Fe-S) centers, to quinones in the respiratory chain. The immediate electron acceptor for the enzyme in this species is believed to be ubiquinone. Couples the redox reaction to proton translocation (for every two electrons transferred, four hydrogen ions are translocated across the cytoplasmic membrane), and thus conserves the redox energy in a proton gradient. In Neisseria meningitidis serogroup B (strain ATCC BAA-335 / MC58), this protein is NADH-quinone oxidoreductase subunit D.